Here is a 243-residue protein sequence, read N- to C-terminus: Octanoyltransferase (243 aa).

The 179-residue stretch at 49 to 227 (PLAPQAVWLL…SLSDRFGLVW (179 aa)) folds into the BPL/LPL catalytic domain. Substrate is bound by residues 91 to 98 (RGGEVTHH), 158 to 160 (AIG), and 171 to 173 (GLA). Cys-189 (acyl-thioester intermediate) is an active-site residue.

Belongs to the LipB family.

It localises to the cytoplasm. The enzyme catalyses octanoyl-[ACP] + L-lysyl-[protein] = N(6)-octanoyl-L-lysyl-[protein] + holo-[ACP] + H(+). The protein operates within protein modification; protein lipoylation via endogenous pathway; protein N(6)-(lipoyl)lysine from octanoyl-[acyl-carrier-protein]: step 1/2. In terms of biological role, catalyzes the transfer of endogenously produced octanoic acid from octanoyl-acyl-carrier-protein onto the lipoyl domains of lipoate-dependent enzymes. Lipoyl-ACP can also act as a substrate although octanoyl-ACP is likely to be the physiological substrate. In Prochlorococcus marinus (strain MIT 9313), this protein is Octanoyltransferase.